Reading from the N-terminus, the 961-residue chain is Mitogen-activated protein kinase kinase kinase 13-B (961 aa).

The disordered stretch occupies residues 89-115 (RDQDEPENTAPQGSSHSGDGGNNSANE). Positions 101–114 (GSSHSGDGGNNSAN) are enriched in low complexity. The Protein kinase domain maps to 171 to 412 (ISELQWLGSG…FRQILMHLDI (242 aa)). ATP-binding positions include 177-185 (LGSGAQGAV) and K198. D282 serves as the catalytic Proton acceptor. Leucine-zipper regions lie at residues 436-457 (VKKHFEKIKSEGTCIHRLDEEL) and 489-510 (LSSIMLQLEVREKELTRREQTV). Positions 460 to 497 (RRREELRHALDIREHYERKLERANNLYMELSSIMLQLE) form a coiled coil. 3 disordered regions span residues 507-644 (EQTV…ETSQ), 796-874 (TPPA…DVAC), and 933-961 (NAESDCDSSEGECSDATVRTNNPVNSSTW). Positions 563-580 (AEGSAASASPISGSPKTS) are enriched in low complexity. Residues 586-598 (GRYRSKPRHRRGN) are compositionally biased toward basic residues. Residues 613–628 (QESPAPSQQSSQHQTP) show a composition bias toward low complexity. Over residues 813–826 (DSSEGEEGEVDSEV) the composition is skewed to acidic residues. Positions 814-827 (SSEGEEGEVDSEVE) are acidic. Positions 839-854 (STCQSYSTFSSENFSV) are enriched in polar residues. Acidic residues predominate over residues 934–945 (AESDCDSSEGEC). Residues 949–961 (TVRTNNPVNSSTW) are compositionally biased toward polar residues.

It belongs to the protein kinase superfamily. Ser/Thr protein kinase family.

It is found in the cytoplasm. Its subcellular location is the membrane. It carries out the reaction L-seryl-[protein] + ATP = O-phospho-L-seryl-[protein] + ADP + H(+). The enzyme catalyses L-threonyl-[protein] + ATP = O-phospho-L-threonyl-[protein] + ADP + H(+). May have a role in the JNK signaling pathway. The sequence is that of Mitogen-activated protein kinase kinase kinase 13-B (map3k13-b) from Xenopus laevis (African clawed frog).